A 396-amino-acid polypeptide reads, in one-letter code: Tryptophan synthase beta chain (396 aa).

Lys-86 is modified (N6-(pyridoxal phosphate)lysine).

It belongs to the TrpB family. As to quaternary structure, tetramer of two alpha and two beta chains. Requires pyridoxal 5'-phosphate as cofactor.

The catalysed reaction is (1S,2R)-1-C-(indol-3-yl)glycerol 3-phosphate + L-serine = D-glyceraldehyde 3-phosphate + L-tryptophan + H2O. It participates in amino-acid biosynthesis; L-tryptophan biosynthesis; L-tryptophan from chorismate: step 5/5. Its function is as follows. The beta subunit is responsible for the synthesis of L-tryptophan from indole and L-serine. In Vibrio vulnificus (strain CMCP6), this protein is Tryptophan synthase beta chain.